A 214-amino-acid polypeptide reads, in one-letter code: Tungstate uptake system ATP-binding protein TupC (214 aa).

The region spanning 3 to 214 (ITVSNLKKSY…GRVGEADGFF (212 aa)) is the ABC transporter domain. 35-42 (GPNGAGKT) provides a ligand contact to ATP.

Belongs to the ABC transporter superfamily. In terms of assembly, the complex is composed of two ATP-binding proteins (TupC), two transmembrane proteins (TupB) and a solute-binding protein (TupA).

The enzyme catalyses tungstate(in) + ATP + H2O = tungstate(out) + ADP + phosphate + H(+). Its function is as follows. Part of an ABC transporter complex involved in tungstate uptake. Probably responsible for energy coupling to the transport system. The polypeptide is Tungstate uptake system ATP-binding protein TupC (Peptoclostridium acidaminophilum (Eubacterium acidaminophilum)).